The chain runs to 468 residues: Mitochondrial adenyl nucleotide antiporter SLC25A23 (468 aa).

Positions 1-149 (MRGSPGDAER…DHFLLHSLEN (149 aa)) are regulatory N-terminal domain. The Mitochondrial intermembrane portion of the chain corresponds to 1–188 (MRGSPGDAER…EKLTGMWWKQ (188 aa)). The EF-hand 1 domain occupies 9–44 (ERRQRWGRLFEELDSNKDGRVDVHELRQGLARLGGG). Residues D22, N24, D26, R28, and E33 each contribute to the Ca(2+) site. The segment at 34–67 (LRQGLARLGGGNPDPGAQQGISSEGDADPDGGLD) is disordered. A compositionally biased stretch (acidic residues) spans 58-67 (GDADPDGGLD). EF-hand domains are found at residues 77 to 112 (EREQ…LGIS) and 113 to 148 (ISLE…HSLE). Residues D90, N92, D94, H96, and E101 each coordinate Ca(2+). Residues 150-159 (VEDVLYFWKH) form a linker region region. Residues 165 to 468 (IGECLTVPDE…MKQALGVTSR (304 aa)) are C-terminal transmembrane transporter domain. Solcar repeat units lie at residues 183 to 269 (GMWW…IKRA), 277 to 362 (LHVQ…LKNW), and 374 to 462 (PGIL…MKQA). The chain crosses the membrane as a helical span at residues 189-206 (LVAGAVAGAVSRTGTAPL). Over 207 to 243 (DRLKVFMQVHASKTNRLNILGGLRSMVLEGGIRSLWR) the chain is Mitochondrial matrix. Residues 244–263 (GNGINVLKIAPESAIKFMAY) traverse the membrane as a helical segment. The Mitochondrial intermembrane segment spans residues 264-286 (EQIKRAILGQQETLHVQERFVAG). Residues 287–300 (SLAGATAQTIIYPM) form a helical membrane-spanning segment. Residues 301 to 336 (EVLKTRLTLRRTGQYKGLLDCARRILEREGPRAFYR) lie on the Mitochondrial matrix side of the membrane. The chain crosses the membrane as a helical span at residues 337 to 356 (GYLPNVLGIIPYAGIDLAVY). Topologically, residues 357–379 (ETLKNWWLQQYSHDSADPGILVL) are mitochondrial intermembrane. Residues 380-397 (LACGTISSTCGQIASYPL) traverse the membrane as a helical segment. Topologically, residues 398 to 436 (ALVRTRMQAQASIEGGPQLSMLGLLRHILSQEGMRGLYR) are mitochondrial matrix. The helical transmembrane segment at 437–456 (GIAPNFMKVIPAVSISYVVY) threads the bilayer. At 457–468 (ENMKQALGVTSR) the chain is on the mitochondrial intermembrane side.

The protein belongs to the mitochondrial carrier (TC 2.A.29) family. In terms of assembly, interacts with MCU. Interacts with MICU1. As to expression, expressed at low levels in most tissues examined, with highest expression in brain, skeletal muscle and pancreas.

The protein resides in the mitochondrion inner membrane. It carries out the reaction Mg(2+)(out) + phosphate(in) + ATP(out) = Mg(2+)(in) + phosphate(out) + ATP(in). The catalysed reaction is ADP(out) + phosphate(in) + H(+)(out) = ADP(in) + phosphate(out) + H(+)(in). The enzyme catalyses AMP(out) + phosphate(in) = AMP(in) + phosphate(out). It catalyses the reaction phosphate(in) + ATP(out) + 2 H(+)(out) = phosphate(out) + ATP(in) + 2 H(+)(in). It carries out the reaction dADP(in) + ADP(out) = dADP(out) + ADP(in). The catalysed reaction is Mg(2+)(in) + ADP(out) + ATP(in) + H(+)(out) = Mg(2+)(out) + ADP(in) + ATP(out) + H(+)(in). The enzyme catalyses ADP(out) + diphosphate(in) = ADP(in) + diphosphate(out). It catalyses the reaction dAMP(in) + ADP(out) + H(+)(out) = dAMP(out) + ADP(in) + H(+)(in). It carries out the reaction 3'-AMP(in) + ADP(out) + H(+)(out) = 3'-AMP(out) + ADP(in) + H(+)(in). The catalysed reaction is dAMP(out) + phosphate(in) = dAMP(in) + phosphate(out). The enzyme catalyses 3'-AMP(out) + phosphate(in) = 3'-AMP(in) + phosphate(out). It catalyses the reaction dADP(out) + phosphate(in) + H(+)(out) = dADP(in) + phosphate(out) + H(+)(in). Activated by an increase in cytosolic calcium levels that induce a conformational change of the N-terminal regulatory domain, uncapping the channel and allowing transport. Inhibited by bathophenanthroline, mersalyl, p-hydroxymercuribenzoate, bromcresol purple, tannic acid, pyridoxal 5'-phosphate and p-hydroxymercuribenzoate. Its function is as follows. Electroneutral antiporter that mediates the transport of adenine nucleotides through the inner mitochondrial membrane. Originally identified as an ATP-magnesium/inorganic phosphate antiporter, it also acts as a broad specificity adenyl nucleotide antiporter. By regulating the mitochondrial matrix adenine nucleotide pool could adapt to changing cellular energetic demands and indirectly regulate adenine nucleotide-dependent metabolic pathways. Also acts as a regulator of mitochondrial calcium uptake and can probably transport trace amounts of other divalent metal cations in complex with ATP. In vitro, a low activity is also observed with guanyl and pyrimidine nucleotides. The sequence is that of Mitochondrial adenyl nucleotide antiporter SLC25A23 from Homo sapiens (Human).